Here is a 450-residue protein sequence, read N- to C-terminus: Molybdate-anion transporter (450 aa).

Helical transmembrane passes span 1–21, 43–63, 79–99, 128–148, 174–194, 195–215, 249–269, 278–298, 311–331, 344–364, 376–396, and 409–429; these read MLVTAYLAFVGLLASCLGLEL, LDFYQVYFLALAADWLQAPYL, ILYVCGLASTVLFGLVASSLV, FVLLVGRALGGLSTALLFSAF, AAFWNHVLAVVAGVAAEAVAS, WIGLGPVAPFVAAIPLLALAG, VLLLGTIQALFESVIFIFVFL, GAPLGIIFSSFMAASLLGSSL, PMHLLSLAVLIVVFSLFMLTF, FIAFLLIELACGLYFPSMSFL, GVLNWFRVPLHSLACLGLLVL, and FSICSAVMVMALLAVVGLFTV.

The protein belongs to the major facilitator superfamily. As to expression, expressed ubiquitously but at relatively higher levels in the olfactory bulb and the skeletal muscle.

It is found in the cell membrane. Functionally, mediates high-affinity intracellular uptake of the rare oligo-element molybdenum. This is Molybdate-anion transporter (MFSD5) from Homo sapiens (Human).